Consider the following 254-residue polypeptide: MTQAFTVVIPARYASTRLPGKPLQDIAGQPMIQRVWNQARKSAASRVVVATDDERILAACQGFGAEALLTRAEHNSGTDRLEEVASRLGLASDAIVVNVQGDEPLIPPALIDQVAANLAAHPEAAIATLAEPIHEVSALFNPNVVKVATDIDGLALTFSRAPLPWARDAFARDRDSLPEGVPYRRHIGIYAYRVGFLADFVAWGPCWLENAESLEQLRALWHGVRIHVADARETMLPGVDTPEDLERVRRVLGD.

The protein belongs to the KdsB family.

The protein resides in the cytoplasm. It carries out the reaction 3-deoxy-alpha-D-manno-oct-2-ulosonate + CTP = CMP-3-deoxy-beta-D-manno-octulosonate + diphosphate. The protein operates within nucleotide-sugar biosynthesis; CMP-3-deoxy-D-manno-octulosonate biosynthesis; CMP-3-deoxy-D-manno-octulosonate from 3-deoxy-D-manno-octulosonate and CTP: step 1/1. It participates in bacterial outer membrane biogenesis; lipopolysaccharide biosynthesis. Its function is as follows. Activates KDO (a required 8-carbon sugar) for incorporation into bacterial lipopolysaccharide in Gram-negative bacteria. This Pseudomonas aeruginosa (strain UCBPP-PA14) protein is 3-deoxy-manno-octulosonate cytidylyltransferase.